Here is a 123-residue protein sequence, read N- to C-terminus: Large ribosomal subunit protein bL12 (123 aa).

It belongs to the bacterial ribosomal protein bL12 family. Homodimer. Part of the ribosomal stalk of the 50S ribosomal subunit. Forms a multimeric L10(L12)X complex, where L10 forms an elongated spine to which 2 to 4 L12 dimers bind in a sequential fashion. Binds GTP-bound translation factors.

Functionally, forms part of the ribosomal stalk which helps the ribosome interact with GTP-bound translation factors. Is thus essential for accurate translation. The polypeptide is Large ribosomal subunit protein bL12 (Cytophaga hutchinsonii (strain ATCC 33406 / DSM 1761 / CIP 103989 / NBRC 15051 / NCIMB 9469 / D465)).